Consider the following 292-residue polypeptide: Bis(5'-nucleosyl)-tetraphosphatase, symmetrical (292 aa).

Residues 271–292 (LSIEHPRHTHTPRRQAKKHSKK) form a disordered region. Over residues 277–292 (RHTHTPRRQAKKHSKK) the composition is skewed to basic residues.

This sequence belongs to the Ap4A hydrolase family.

It carries out the reaction P(1),P(4)-bis(5'-adenosyl) tetraphosphate + H2O = 2 ADP + 2 H(+). Functionally, hydrolyzes diadenosine 5',5'''-P1,P4-tetraphosphate to yield ADP. In Xylella fastidiosa (strain 9a5c), this protein is Bis(5'-nucleosyl)-tetraphosphatase, symmetrical (apaH).